Here is a 347-residue protein sequence, read N- to C-terminus: Phenylalanine--tRNA ligase alpha subunit (347 aa).

Residue Glu261 participates in Mg(2+) binding.

This sequence belongs to the class-II aminoacyl-tRNA synthetase family. Phe-tRNA synthetase alpha subunit type 1 subfamily. In terms of assembly, tetramer of two alpha and two beta subunits. It depends on Mg(2+) as a cofactor.

It is found in the cytoplasm. The enzyme catalyses tRNA(Phe) + L-phenylalanine + ATP = L-phenylalanyl-tRNA(Phe) + AMP + diphosphate + H(+). In Streptococcus pyogenes serotype M1, this protein is Phenylalanine--tRNA ligase alpha subunit.